The primary structure comprises 60 residues: Large ribosomal subunit protein bL32 (60 aa).

Residues Met-1–Glu-60 form a disordered region. Positions Asn-24–Glu-35 are enriched in polar residues. Residues Arg-49–Glu-60 show a composition bias toward basic residues.

Belongs to the bacterial ribosomal protein bL32 family.

This chain is Large ribosomal subunit protein bL32, found in Bordetella petrii (strain ATCC BAA-461 / DSM 12804 / CCUG 43448).